A 518-amino-acid polypeptide reads, in one-letter code: Metalloprotease TIKI2 (518 aa).

An N-terminal signal peptide occupies residues 1 to 22; it reads MNCQSGLRWLVTLCAFFQVGSA. At 23–499 the chain is on the extracellular side; sequence RDTHESTRQC…SALDSAAPNP (477 aa). N224, N233, N282, N325, and N340 each carry an N-linked (GlcNAc...) asparagine glycan. The chain crosses the membrane as a helical span at residues 500-517; it reads TYALTCFLACLISQLLFA. S518 is a topological domain (cytoplasmic).

This sequence belongs to the TIKI family. Requires Mn(2+) as cofactor. It depends on Co(2+) as a cofactor.

It localises to the cell membrane. In terms of biological role, metalloprotease that acts as a negative regulator of the Wnt signaling pathway by mediating the cleavage of the N-terminal residues of a subset of Wnt proteins. Following cleavage, Wnt proteins become oxidized and form large disulfide-bond oligomers, leading to their inactivation. This is Metalloprotease TIKI2 (trabd2b) from Danio rerio (Zebrafish).